We begin with the raw amino-acid sequence, 362 residues long: Porin Omp2b (362 aa).

The N-terminal stretch at 1-22 (MNIKSLLLGSAAALVAASGAQA) is a signal peptide.

It belongs to the alphaproteobacteria porin family. As to quaternary structure, homotrimer.

The protein resides in the cell outer membrane. Functionally, forms passive diffusion pores that allow small molecular weight hydrophilic materials across the outer membrane. This Brucella neotomae protein is Porin Omp2b (omp2b).